Consider the following 153-residue polypeptide: Arachidonate 5-lipoxygenase-activating protein (153 aa).

The Lumenal segment spans residues 1-8 (MDQEAMGN). Residues 9 to 30 (IVLLAIVTLISVVQNAFFAHKV) form a helical membrane-spanning segment. Residues 31–52 (EHESKTHNGRSFQRTGTPAFER) are Cytoplasmic-facing. Residues 53–77 (VYTANQNCVDAYPTFLVVLWSAGLF) traverse the membrane as a helical segment. Residues 78 to 80 (CSQ) are Lumenal-facing. Residues 81-102 (VPAAFAGLMYLFVRQKYFVGYL) traverse the membrane as a helical segment. Over 103 to 107 (GERTQ) the chain is Cytoplasmic. The stretch at 108-115 (STPGYIFG) is an intramembrane region. The chain crosses the membrane as a helical span at residues 116-128 (KRIILFLFLMSLA). Over 129 to 153 (GIFNYFLILFFGSDFENYIKTITTT) the chain is Lumenal.

This sequence belongs to the MAPEG family. In terms of assembly, homotrimer. Interacts with LTC4S and ALOX5.

It is found in the nucleus membrane. The protein localises to the endoplasmic reticulum membrane. Functionally, required for leukotriene biosynthesis by ALOX5 (5-lipoxygenase). Anchors ALOX5 to the membrane. Binds arachidonic acid, and could play an essential role in the transfer of arachidonic acid to ALOX5. Binds to MK-886, a compound that blocks the biosynthesis of leukotrienes. In Sus scrofa (Pig), this protein is Arachidonate 5-lipoxygenase-activating protein (ALOX5AP).